We begin with the raw amino-acid sequence, 435 residues long: Cyclin-dependent kinase 14 (435 aa).

The segment covering Arg-75–Ser-92 has biased composition (polar residues). A disordered region spans residues Arg-75–Lys-97. Positions Tyr-101–Phe-385 constitute a Protein kinase domain. ATP is bound by residues Leu-107–Val-115 and Lys-130. The active-site Proton acceptor is Asp-222.

The protein belongs to the protein kinase superfamily. CMGC Ser/Thr protein kinase family. CDC2/CDKX subfamily. As to quaternary structure, interacts with ccny; ccny mediates its recruitment to the plasma membrane and promotes phosphorylation of lrp6.

Its subcellular location is the cell membrane. The catalysed reaction is L-seryl-[protein] + ATP = O-phospho-L-seryl-[protein] + ADP + H(+). It carries out the reaction L-threonyl-[protein] + ATP = O-phospho-L-threonyl-[protein] + ADP + H(+). Serine/threonine-protein kinase involved in the control of the eukaryotic cell cycle, whose activity is controlled by an associated cyclin. Acts as a cell-cycle regulator of Wnt signaling pathway during G2/M phase by mediating the phosphorylation of lrp6, leading to the activation of the Wnt signaling pathway. The chain is Cyclin-dependent kinase 14 (cdk14) from Xenopus laevis (African clawed frog).